The sequence spans 222 residues: Ribosomal RNA small subunit methyltransferase I (222 aa).

The protein belongs to the methyltransferase superfamily. RsmI family.

The protein localises to the cytoplasm. It catalyses the reaction cytidine(1402) in 16S rRNA + S-adenosyl-L-methionine = 2'-O-methylcytidine(1402) in 16S rRNA + S-adenosyl-L-homocysteine + H(+). In terms of biological role, catalyzes the 2'-O-methylation of the ribose of cytidine 1402 (C1402) in 16S rRNA. This chain is Ribosomal RNA small subunit methyltransferase I, found in Thermotoga maritima (strain ATCC 43589 / DSM 3109 / JCM 10099 / NBRC 100826 / MSB8).